The following is a 261-amino-acid chain: MEVNDKFFAQDDIFWENYLKGRPRVPDSFFDRIFDYHKAKGGHFGTVHDVGAGNGPYALRLRSRFDHVIVSDIVANNIELARRRLQGEEGFSFRTSRLQDADDIAAGSVDMVFATNVMHFADPQDIAMAAIAHQLRPGALFRQGGRQLLNKANDPTETARVMLRTQGTRGIQSMLPLDDVHQTTPEPNYTGPDDAEIYEDDEGWSFETDLAGVKEHFESFPFVSQFPGAFTEMYRELDDLLADGKPVQGYFPVKVILATRS.

A methyltransferase domain region spans residues 49-141; sequence DVGAGNGPYA…AHQLRPGALF (93 aa).

It belongs to the methyltransferase superfamily.

The protein operates within secondary metabolite biosynthesis. Methyltransferase; part of the gene cluster that mediates the biosynthesis of the tetrahydroxanthone dimer neosartorin, which exhibits antibacterial activity. The two different monomeric units appear to be synthesized by the same set of enzymes, among which the Baeyer-Villiger monooxygenase nsrF is the key enzyme for the divergence of the biosynthetic routes. The pathway begins with the synthesis of atrochrysone thioester by the polyketide synthase nsrB. The atrochrysone carboxyl ACP thioesterase nsrC then breaks the thioester bond and releases the atrochrysone carboxylic acid from AacuL. Atrochrysone carboxylic acid is decarboxylated by the decarboxylase nsrE, and oxidized by the anthrone oxygenase nsrD to yield emodin. Emodin is then reduced to emodin hydroquinone by the oxidoreductase nsrR. A-ring reduction by the short chain dehydrogenase nsrJ, dehydration by the scytalone dehydratase-like protein nsrI and probable spontaneous re-oxidation, results in overall deoxygenation to chrysophanol. The Baeyer-Villiger monooxygenase nsrF accepts chrysophanol as a substrate to insert one oxygen atom at two different positions to yield the precursors of both monomric units. NsrF is promiscuous/flexible in interacting with the 2 (non methylated and methylated) aromatic rings of chrysophanol, thus diverging the biosynthetic pathway at this point. After the hydrolysis of the lactones, methylesterification by the methyltransferase nsrG yields respectively moniliphenone and 2,2',6'-trihydroxy-4-methyl-6-methoxya-cyldiphenylmethanone. The next steps are the hydroxylation by the FAD-dependent monooxygenase nsrK, followed by isomerization by the monooxygenase nsrQ. The short chain dehydrogenase/reductase nsrO then catalyzes the C-5 ketoreduction to give the xanthone skeleton of blennolide C and 5-acetylblennolide A. The acetyltransferase nsrL has a strict substrate specificity and uses only blennolide A but not blennolide C to yield 5-acetylblennolide A as the single-acetylated product. In the final step of the biosynthesis, the heterodimerization of the 2 xanthones, blennolide C and 5-acetylblennolide A, is catalyzed by the cytochrome P450 monooxygenase nsrP. NsrP can utilize at least three different xanthones as its substrates to perform the dimerization reaction. This Aspergillus novofumigatus (strain IBT 16806) protein is Methyltransferase nsrG.